The sequence spans 584 residues: Pectinesterase 1 (584 aa).

Positions 1 to 42 (MTHIKEFFTKLSESSSNQNISNIPKKKKKLFLALFATLLVVA) are cleaved as a signal peptide. Residues asparagine 108, asparagine 129, and asparagine 226 are each glycosylated (N-linked (GlcNAc...) asparagine). Positions 348 and 378 each coordinate substrate. Aspartate 401 (proton donor) is an active-site residue. Residues cysteine 415 and cysteine 435 are joined by a disulfide bond. Aspartate 422 (nucleophile) is an active-site residue. 2 residues coordinate substrate: arginine 490 and tryptophan 492.

The protein in the N-terminal section; belongs to the PMEI family. In the C-terminal section; belongs to the pectinesterase family. Expressed at high levels in flower buds, shoots and young leaves, and at lower levels in young fruit, young bark and juice vesicles. Not expressed at significant levels in leaf abscission zones following ethylene treatment or in mature leaves. In fruit abscission zones, expression was initially undetectable but increased markedly following ethylene treatment.

The protein resides in the secreted. It localises to the cell wall. The enzyme catalyses [(1-&gt;4)-alpha-D-galacturonosyl methyl ester](n) + n H2O = [(1-&gt;4)-alpha-D-galacturonosyl](n) + n methanol + n H(+). It participates in glycan metabolism; pectin degradation; 2-dehydro-3-deoxy-D-gluconate from pectin: step 1/5. Functionally, acts in the modification of cell walls via demethylesterification of cell wall pectin. The polypeptide is Pectinesterase 1 (PECS-1.1) (Citrus sinensis (Sweet orange)).